We begin with the raw amino-acid sequence, 115 residues long: uncharacterized protein (115 aa).

Positions 1 to 86 are disordered; it reads RRPARSGGDG…LSSQLVRPSR (86 aa).

This is an uncharacterized protein from Homo sapiens (Human).